The chain runs to 104 residues: MNPENPPPYPGPGPTAPYPPYPQQPMGPMGPMGAPPPQGYPYPPPQGYPYQGYPQYGWQGGPQEPPKTTVYVVEDQRRDDLGPSTCLTACWTALCCCCLWDMLT.

2 stretches are compositionally biased toward pro residues: residues 1 to 25 (MNPE…PQQP) and 33 to 47 (GAPP…PPQG). Positions 1-47 (MNPENPPPYPGPGPTAPYPPYPQQPMGPMGPMGAPPPQGYPYPPPQG) are disordered. The chain crosses the membrane as a helical span at residues 81–98 (LGPSTCLTACWTALCCCC).

It belongs to the CYSTM1 family.

Its subcellular location is the membrane. The protein is Cysteine-rich and transmembrane domain-containing protein 1 (Cystm1) of Mus musculus (Mouse).